The sequence spans 345 residues: D-alanine--D-alanine ligase (345 aa).

One can recognise an ATP-grasp domain in the interval 137–342; the sequence is KAAFSAAGLP…LEELVHQLLE (206 aa). 169-224 lines the ATP pocket; sequence ETQLGYPCFIKPANLGSSVGISKATNRSELQAGLDLAASHDSRLLVEKGLQVRELE. Mg(2+)-binding residues include D295, E309, and N311.

The protein belongs to the D-alanine--D-alanine ligase family. Mg(2+) is required as a cofactor. It depends on Mn(2+) as a cofactor.

The protein localises to the cytoplasm. The enzyme catalyses 2 D-alanine + ATP = D-alanyl-D-alanine + ADP + phosphate + H(+). The protein operates within cell wall biogenesis; peptidoglycan biosynthesis. Functionally, cell wall formation. The sequence is that of D-alanine--D-alanine ligase from Synechococcus sp. (strain RCC307).